Here is a 289-residue protein sequence, read N- to C-terminus: Serine/threonine-protein phosphatase Pgam5, mitochondrial (289 aa).

A helical transmembrane segment spans residues 7–23; it reads FACGTGAGLLTFYLTKL.

The protein belongs to the phosphoglycerate mutase family. BPG-dependent PGAM subfamily. As to quaternary structure, interacts with Pk92B/ASK1.

The protein localises to the mitochondrion outer membrane. The enzyme catalyses O-phospho-L-seryl-[protein] + H2O = L-seryl-[protein] + phosphate. It catalyses the reaction O-phospho-L-threonyl-[protein] + H2O = L-threonyl-[protein] + phosphate. Its function is as follows. Displays phosphatase activity for serine/threonine residues, and dephosphorylates and activates Pk92B kinase. Has apparently no phosphoglycerate mutase activity. The protein is Serine/threonine-protein phosphatase Pgam5, mitochondrial of Drosophila persimilis (Fruit fly).